Reading from the N-terminus, the 540-residue chain is Chaperonin GroEL (540 aa).

Residues 29 to 32 (TLGP), 86 to 90 (DGTTT), glycine 413, 476 to 478 (NAA), and aspartate 492 each bind ATP.

Belongs to the chaperonin (HSP60) family. Forms a cylinder of 14 subunits composed of two heptameric rings stacked back-to-back. Interacts with the co-chaperonin GroES.

Its subcellular location is the cytoplasm. It carries out the reaction ATP + H2O + a folded polypeptide = ADP + phosphate + an unfolded polypeptide.. Its function is as follows. Together with its co-chaperonin GroES, plays an essential role in assisting protein folding. The GroEL-GroES system forms a nano-cage that allows encapsulation of the non-native substrate proteins and provides a physical environment optimized to promote and accelerate protein folding. In Tsukamurella paurometabola (Corynebacterium paurometabolum), this protein is Chaperonin GroEL.